Here is a 434-residue protein sequence, read N- to C-terminus: DNA primase DnaG (434 aa).

The 80-residue stretch at 171-250 folds into the Toprim domain; sequence DAIIIVEGRA…AFSPRRRSVE (80 aa). Mg(2+) is bound by residues Glu177, Asp219, and Asp221. Residues 290-319 form a disordered region; that stretch reads GEEEHSSVSQKEEGNNTTPDVPADLPEEPP. Basic and acidic residues predominate over residues 292–303; the sequence is EEHSSVSQKEEG.

This sequence belongs to the archaeal DnaG primase family. As to quaternary structure, forms a ternary complex with MCM helicase and DNA. It depends on Mg(2+) as a cofactor.

The enzyme catalyses ssDNA + n NTP = ssDNA/pppN(pN)n-1 hybrid + (n-1) diphosphate.. Functionally, RNA polymerase that catalyzes the synthesis of short RNA molecules used as primers for DNA polymerase during DNA replication. This is DNA primase DnaG from Methanocorpusculum labreanum (strain ATCC 43576 / DSM 4855 / Z).